Here is a 270-residue protein sequence, read N- to C-terminus: MNETTPIAPAKVLPDAQTVTSVRHWTDTLFSFRVTRPQTLRFRSGEFVMIGLLDDNGKPIMRAYSIASPAWDEELEFYSIKVPDGPLTSRLQHIKVGEQIILRPKPVGTLVIDALLPGKRLWFLATGTGIAPFASLMREPEAYEKFDEVIMMHACRTVAELEYGRQLVEALQEDPLIGELVEGKLKYYPTTTREEFHHMGRITDNLASGKVFEDLGIAPMNPETDRAMVCGSLAFNVDVMKVLESYGLREGANSEPREFVVEKAFVGEGI.

Residues 12 to 113 (VLPDAQTVTS…PKPVGTLVID (102 aa)) enclose the FAD-binding FR-type domain. Residues 62-65 (RAYS), 78-80 (YSI), and 86-88 (PLT) contribute to the FAD site. T126 is a binding site for NADP(+). An FAD-binding site is contributed by T128. Residues R156, 192–193 (TR), R201, and D238 contribute to the NADP(+) site. 264-270 (AFVGEGI) serves as a coordination point for FAD.

The protein belongs to the ferredoxin--NADP reductase type 1 family. Monomer. Requires FAD as cofactor.

Its subcellular location is the cytoplasm. It catalyses the reaction 2 reduced [2Fe-2S]-[ferredoxin] + NADP(+) + H(+) = 2 oxidized [2Fe-2S]-[ferredoxin] + NADPH. The catalysed reaction is reduced [flavodoxin] + NADP(+) = oxidized [flavodoxin] + NADPH + 2 H(+). Its function is as follows. Transports electrons between flavodoxin or ferredoxin and NADPH. This chain is Flavodoxin/ferredoxin--NADP reductase, found in Rhodobacter capsulatus (Rhodopseudomonas capsulata).